A 181-amino-acid chain; its full sequence is ATP synthase subunit delta (181 aa).

The protein belongs to the ATPase delta chain family. As to quaternary structure, F-type ATPases have 2 components, F(1) - the catalytic core - and F(0) - the membrane proton channel. F(1) has five subunits: alpha(3), beta(3), gamma(1), delta(1), epsilon(1). F(0) has three main subunits: a(1), b(2) and c(10-14). The alpha and beta chains form an alternating ring which encloses part of the gamma chain. F(1) is attached to F(0) by a central stalk formed by the gamma and epsilon chains, while a peripheral stalk is formed by the delta and b chains.

It localises to the cell inner membrane. F(1)F(0) ATP synthase produces ATP from ADP in the presence of a proton or sodium gradient. F-type ATPases consist of two structural domains, F(1) containing the extramembraneous catalytic core and F(0) containing the membrane proton channel, linked together by a central stalk and a peripheral stalk. During catalysis, ATP synthesis in the catalytic domain of F(1) is coupled via a rotary mechanism of the central stalk subunits to proton translocation. Its function is as follows. This protein is part of the stalk that links CF(0) to CF(1). It either transmits conformational changes from CF(0) to CF(1) or is implicated in proton conduction. This chain is ATP synthase subunit delta, found in Protochlamydia amoebophila (strain UWE25).